The following is a 228-amino-acid chain: MKVSYHGHSVVQIETGGKTILIDPFITGNELTDLNADHVEADVILLTHGHNDHVGDTVAIAKRTGALVVAVAELATYMGFQGVENVHPMSIGGAYQFDFGRVKFTQAFHGSSFTEEDSQKIVYTGMPGGILFTAEGKTIYHAGDTALFSDMKLIGERHPIDLAFLPIGDNFTMGPEDAKTATEWIGASLTVPIHYNTFPPIKQDPHAFVTSLQSGEGRVLEVGETIEL.

Belongs to the UPF0173 family.

In Shouchella clausii (strain KSM-K16) (Alkalihalobacillus clausii), this protein is UPF0173 metal-dependent hydrolase ABC2731.